A 184-amino-acid polypeptide reads, in one-letter code: V-type proton ATPase subunit E (184 aa).

The protein belongs to the V-ATPase E subunit family.

Functionally, produces ATP from ADP in the presence of a proton gradient across the membrane. This is V-type proton ATPase subunit E from Finegoldia magna (strain ATCC 29328 / DSM 20472 / WAL 2508) (Peptostreptococcus magnus).